Here is a 647-residue protein sequence, read N- to C-terminus: Meiotically up-regulated protein C8C9.04 (647 aa).

Disordered stretches follow at residues Met-1–Pro-241 and Arg-387–His-647. Residues Lys-29–Thr-46 show a composition bias toward polar residues. Positions Asn-49–Gln-67 are enriched in basic residues. The span at Thr-92–Ile-103 shows a compositional bias: polar residues. Residues Pro-134–Thr-145 are compositionally biased toward low complexity. Positions Glu-146–Pro-155 are enriched in polar residues. The segment covering Ala-156–Ala-177 has biased composition (low complexity). 2 positions are modified to phosphoserine: Ser-162 and Ser-165. The residue at position 168 (Thr-168) is a Phosphothreonine. Residues Gln-193–Ser-215 are compositionally biased toward polar residues. 2 positions are modified to phosphoserine: Ser-197 and Ser-200. The span at Ala-232 to Pro-241 shows a compositional bias: basic and acidic residues. Polar residues-rich tracts occupy residues Gln-390 to Val-406, Val-413 to Glu-432, and Pro-488 to Ser-508. Ser-396 bears the Phosphoserine mark. Ser-489 and Ser-490 each carry phosphoserine. Phosphothreonine is present on Thr-491. Ser-515, Ser-519, and Ser-523 each carry phosphoserine. Residues Ala-518–Ala-530 are compositionally biased toward low complexity. Polar residues predominate over residues Gly-561–Ser-589. Positions Ala-596–Asn-613 are enriched in low complexity. Residues Ser-633–His-647 show a composition bias toward basic residues.

Has a role in meiosis and sporulation. The protein is Meiotically up-regulated protein C8C9.04 of Schizosaccharomyces pombe (strain 972 / ATCC 24843) (Fission yeast).